The following is a 401-amino-acid chain: Probable trafficking protein particle complex subunit 13 homolog (401 aa).

The protein belongs to the TRAPPC13 family.

The protein is Probable trafficking protein particle complex subunit 13 homolog of Caenorhabditis elegans.